A 287-amino-acid polypeptide reads, in one-letter code: Bifunctional protein FolD (287 aa).

Residues 171–173 and Ile237 contribute to the NADP(+) site; that span reads GHS.

Belongs to the tetrahydrofolate dehydrogenase/cyclohydrolase family. As to quaternary structure, homodimer.

It catalyses the reaction (6R)-5,10-methylene-5,6,7,8-tetrahydrofolate + NADP(+) = (6R)-5,10-methenyltetrahydrofolate + NADPH. The catalysed reaction is (6R)-5,10-methenyltetrahydrofolate + H2O = (6R)-10-formyltetrahydrofolate + H(+). Its pathway is one-carbon metabolism; tetrahydrofolate interconversion. Its function is as follows. Catalyzes the oxidation of 5,10-methylenetetrahydrofolate to 5,10-methenyltetrahydrofolate and then the hydrolysis of 5,10-methenyltetrahydrofolate to 10-formyltetrahydrofolate. This chain is Bifunctional protein FolD, found in Methanosarcina barkeri (strain Fusaro / DSM 804).